The sequence spans 591 residues: Aspartate--tRNA ligase (591 aa).

Glu-172 serves as a coordination point for L-aspartate. Residues 196 to 199 form an aspartate region; that stretch reads QLFK. Residue Arg-218 coordinates L-aspartate. ATP contacts are provided by residues 218–220 and Gln-227; that span reads RDE. His-449 is an L-aspartate binding site. An ATP-binding site is contributed by Glu-483. Arg-490 contacts L-aspartate. Residue 535 to 538 coordinates ATP; that stretch reads GLDR.

It belongs to the class-II aminoacyl-tRNA synthetase family. Type 1 subfamily. As to quaternary structure, homodimer.

Its subcellular location is the cytoplasm. It catalyses the reaction tRNA(Asp) + L-aspartate + ATP = L-aspartyl-tRNA(Asp) + AMP + diphosphate. Its function is as follows. Catalyzes the attachment of L-aspartate to tRNA(Asp) in a two-step reaction: L-aspartate is first activated by ATP to form Asp-AMP and then transferred to the acceptor end of tRNA(Asp). The polypeptide is Aspartate--tRNA ligase (Actinobacillus pleuropneumoniae serotype 7 (strain AP76)).